The sequence spans 477 residues: Glycogen synthase (477 aa).

K15 provides a ligand contact to ADP-alpha-D-glucose.

It belongs to the glycosyltransferase 1 family. Bacterial/plant glycogen synthase subfamily.

It carries out the reaction [(1-&gt;4)-alpha-D-glucosyl](n) + ADP-alpha-D-glucose = [(1-&gt;4)-alpha-D-glucosyl](n+1) + ADP + H(+). Its pathway is glycan biosynthesis; glycogen biosynthesis. In terms of biological role, synthesizes alpha-1,4-glucan chains using ADP-glucose. In Streptococcus pneumoniae (strain 70585), this protein is Glycogen synthase.